A 440-amino-acid polypeptide reads, in one-letter code: Transposon Ty1-MR1 Gag polyprotein (440 aa).

Polar residues-rich tracts occupy residues 1-31, 46-60, and 137-168; these read MESQQLSQHSPISHGSACASVTSKEVQTTQD, VSTQANSQQPTTPLS, and VGTHLNTPSPESGNSFPDSSSAKSNMTSTNQH. Disordered stretches follow at residues 1–88, 137–174, and 350–424; these read MESQ…YPQQ, VGTHLNTPSPESGNSFPDSSSAKSNMTSTNQHVRPPPI, and QQES…TTEP. Residues 299-401 form an RNA-binding region; that stretch reads NNGIPINNKV…NSQSRTARAH (103 aa). Residues 363-372 show a composition bias toward basic and acidic residues; it reads SPSDEKKDSR. Residues 373 to 411 are compositionally biased toward polar residues; it reads TYTNTTKPKSITRNSQKPNNSQSRTARAHNVSTFNNSPG.

Homotrimer.

Its subcellular location is the cytoplasm. Its function is as follows. Capsid protein (CA) is the structural component of the virus-like particle (VLP), forming the shell that encapsulates the retrotransposons dimeric RNA genome. The particles are assembled from trimer-clustered units and there are holes in the capsid shells that allow for the diffusion of macromolecules. CA also has nucleocapsid-like chaperone activity, promoting primer tRNA(i)-Met annealing to the multipartite primer-binding site (PBS), dimerization of Ty1 RNA and initiation of reverse transcription. The protein is Transposon Ty1-MR1 Gag polyprotein (TY1A-MR1) of Saccharomyces cerevisiae (strain ATCC 204508 / S288c) (Baker's yeast).